Reading from the N-terminus, the 87-residue chain is MVNMKASMFLTFAGLVLLFVVCYASESEEKEFPKEMLSSIFAVDNDFKQEERDCAGYMRECKGKLCCSGYVCSSRWKWCVLPAPWRR.

Residues 1–24 (MVNMKASMFLTFAGLVLLFVVCYA) form the signal peptide. Positions 25 to 52 (SESEEKEFPKEMLSSIFAVDNDFKQEER) are excised as a propeptide. 3 cysteine pairs are disulfide-bonded: C54/C67, C61/C72, and C66/C79.

This sequence belongs to the neurotoxin 10 (Hwtx-1) family. 51 (Hntx-8) subfamily. Hntx-8 sub-subfamily. In terms of tissue distribution, expressed by the venom gland.

It is found in the secreted. In terms of biological role, ion channel inhibitor. The polypeptide is U3-theraphotoxin-Hhn1l (Cyriopagopus hainanus (Chinese bird spider)).